The following is a 203-amino-acid chain: Outer-membrane lipoprotein LolB (203 aa).

A signal peptide spans 1–21 (MTGRWSPRLLAGLLAALVLSG). A lipid anchor (N-palmitoyl cysteine) is attached at Cys22. Cys22 is lipidated: S-diacylglycerol cysteine.

It belongs to the LolB family. Monomer.

The protein localises to the cell outer membrane. Its function is as follows. Plays a critical role in the incorporation of lipoproteins in the outer membrane after they are released by the LolA protein. This is Outer-membrane lipoprotein LolB from Halorhodospira halophila (strain DSM 244 / SL1) (Ectothiorhodospira halophila (strain DSM 244 / SL1)).